The sequence spans 708 residues: Polyribonucleotide nucleotidyltransferase (708 aa).

Residues Asp488 and Asp494 each contribute to the Mg(2+) site. The KH domain occupies 555-615 (PIIKVTKVDP…ENVDKAIELI (61 aa)). In terms of domain architecture, S1 motif spans 625–692 (GEVLEGKVTR…DLGRLQFKRV (68 aa)).

Belongs to the polyribonucleotide nucleotidyltransferase family. The cofactor is Mg(2+).

It is found in the cytoplasm. It catalyses the reaction RNA(n+1) + phosphate = RNA(n) + a ribonucleoside 5'-diphosphate. Its function is as follows. Involved in mRNA degradation. Catalyzes the phosphorolysis of single-stranded polyribonucleotides processively in the 3'- to 5'-direction. The sequence is that of Polyribonucleotide nucleotidyltransferase from Thermotoga sp. (strain RQ2).